Consider the following 298-residue polypeptide: Bifunctional protein FolD (298 aa).

NADP(+) is bound by residues 167–169 (GRS), Ser-192, and Ile-233.

The protein belongs to the tetrahydrofolate dehydrogenase/cyclohydrolase family. In terms of assembly, homodimer.

The enzyme catalyses (6R)-5,10-methylene-5,6,7,8-tetrahydrofolate + NADP(+) = (6R)-5,10-methenyltetrahydrofolate + NADPH. The catalysed reaction is (6R)-5,10-methenyltetrahydrofolate + H2O = (6R)-10-formyltetrahydrofolate + H(+). It participates in one-carbon metabolism; tetrahydrofolate interconversion. Catalyzes the oxidation of 5,10-methylenetetrahydrofolate to 5,10-methenyltetrahydrofolate and then the hydrolysis of 5,10-methenyltetrahydrofolate to 10-formyltetrahydrofolate. This chain is Bifunctional protein FolD, found in Caulobacter sp. (strain K31).